Here is a 320-residue protein sequence, read N- to C-terminus: MDFLTLMENKLDEGRMITFEEAVELAKGKIEDEKLFLLADKLCKKNMGRRVDLCSIINAKSGGCSENCKFCAQSGHYDTGVKIYPLLDVDDVLKAAKENEKEGVHRFSLVTSGKSVSDEEFEKILGIYSVLRKETNLKLCASLGSLSYERAVRLKEAGVSMYHHNIETCREYYPKICDTHTYDDRINTVKNAAKAGLEICCGGIIGMGESMEQRIKMAFEIRELGVKSVPINVLNPIKGTPFENVRSLSPDEILRTIALFRLIMPYAHIRYAGGRMCLGEHQSKGFKAGVSAMLVGNYLTTVGNKISDDLEMIQRMGLEI.

The 230-residue stretch at 46–275 (NMGRRVDLCS…YAHIRYAGGR (230 aa)) folds into the Radical SAM core domain. Residues cysteine 64, cysteine 68, and cysteine 71 each contribute to the [4Fe-4S] cluster site. Residues serine 108, cysteine 140, cysteine 200, and arginine 270 each contribute to the [2Fe-2S] cluster site.

It belongs to the radical SAM superfamily. Biotin synthase family. In terms of assembly, homodimer. It depends on [4Fe-4S] cluster as a cofactor. [2Fe-2S] cluster is required as a cofactor.

The enzyme catalyses (4R,5S)-dethiobiotin + (sulfur carrier)-SH + 2 reduced [2Fe-2S]-[ferredoxin] + 2 S-adenosyl-L-methionine = (sulfur carrier)-H + biotin + 2 5'-deoxyadenosine + 2 L-methionine + 2 oxidized [2Fe-2S]-[ferredoxin]. Its pathway is cofactor biosynthesis; biotin biosynthesis; biotin from 7,8-diaminononanoate: step 2/2. Catalyzes the conversion of dethiobiotin (DTB) to biotin by the insertion of a sulfur atom into dethiobiotin via a radical-based mechanism. The chain is Biotin synthase from Acetivibrio thermocellus (strain ATCC 27405 / DSM 1237 / JCM 9322 / NBRC 103400 / NCIMB 10682 / NRRL B-4536 / VPI 7372) (Clostridium thermocellum).